An 869-amino-acid chain; its full sequence is Rho GTPase-activating protein 27 (869 aa).

The SH3 domain maps to 6 to 69 (EGDVYVLVEH…PAQYVRELPA (64 aa)). The interval 104 to 137 (GADGSSAEPRGRASSLCGPARQRTSGQRNSLAPG) is disordered. Residues S155, S215, and S249 each carry the phosphoserine modification. 2 consecutive WW domains span residues 246–280 (PRLS…SPFE) and 299–333 (ESLE…DETE). Disordered stretches follow at residues 275–299 (WESP…GSGE), 331–389 (ETEE…DLGP), and 447–474 (VPVP…PEEK). A compositionally biased stretch (acidic residues) spans 331–343 (ETEELEDDPEEQL). Over residues 345-356 (MQPSLSPRSPGQ) the composition is skewed to polar residues. S350 carries the phosphoserine modification. Residues 414 to 447 (QFTQEQWVRLEDQEGKPYFYNPEDSSVQWELPQV) enclose the WW 3 domain. A phosphoserine mark is found at S459 and S462. Position 464 is a phosphothreonine (T464). A Phosphoserine modification is found at S469. A PH domain is found at 477–593 (TLDKAGVLHR…WHKAIAEGIE (117 aa)). Positions 598-644 (DLPQREEGEPSSADFGSSERLGSWKEEDVRPNAASPSLNPGSQESDL) are disordered. Positions 631 to 642 (ASPSLNPGSQES) are enriched in polar residues. S632 is modified (phosphoserine). The Rho-GAP domain maps to 677 to 866 (CALAQLCERE…LILHQCADIF (190 aa)).

In terms of assembly, interacts with SH3KBP1/CIN85.

The protein localises to the cytoplasm. Its subcellular location is the membrane. Its function is as follows. Rho GTPase-activating protein which may be involved in clathrin-mediated endocytosis. GTPase activators for the Rho-type GTPases act by converting them to an inactive GDP-bound state. Has activity toward CDC42 and RAC1. This chain is Rho GTPase-activating protein 27 (Arhgap27), found in Rattus norvegicus (Rat).